A 70-amino-acid chain; its full sequence is Large ribosomal subunit protein eL24 (70 aa).

Zn(2+) contacts are provided by Cys-6, Cys-9, Cys-32, and Cys-36. A C4-type zinc finger spans residues 6–36; that stretch reads CSYCGRPIPPGYGIMYVRVDGVVLRFCSRRC.

Belongs to the eukaryotic ribosomal protein eL24 family. As to quaternary structure, part of the 50S ribosomal subunit. Forms a cluster with proteins L3 and L14. Zn(2+) serves as cofactor.

In terms of biological role, binds to the 23S rRNA. This chain is Large ribosomal subunit protein eL24, found in Caldivirga maquilingensis (strain ATCC 700844 / DSM 13496 / JCM 10307 / IC-167).